We begin with the raw amino-acid sequence, 262 residues long: GTP cyclohydrolase 1 type 2 homolog (262 aa).

A divalent metal cation-binding residues include histidine 65, aspartate 102, histidine 222, and glutamate 225.

The protein belongs to the GTP cyclohydrolase I type 2/NIF3 family. As to quaternary structure, homohexamer.

This Streptococcus pyogenes serotype M3 (strain ATCC BAA-595 / MGAS315) protein is GTP cyclohydrolase 1 type 2 homolog.